Here is a 361-residue protein sequence, read N- to C-terminus: UDP-D-xylose:L-fucose alpha-1,3-D-xylosyltransferase 1 (361 aa).

Residues 1-21 form a disordered region; the sequence is MEQKQHILKQSTFSSSPSSYS. Topologically, residues 1–34 are cytoplasmic; the sequence is MEQKQHILKQSTFSSSPSSYSSISDRPISLLSRN. Positions 11-21 are enriched in low complexity; sequence STFSSSPSSYS. A helical; Signal-anchor for type II membrane protein membrane pass occupies residues 35–55; the sequence is GLLLLLLALVLLLGVLLPWPG. Over 56–361 the chain is Lumenal; sequence SPLFLFPNRL…ALESPLGKLE (306 aa). N-linked (GlcNAc...) asparagine glycans are attached at residues N92 and N167. The short motif at 190–192 is the DXD motif element; it reads DVD. 2 N-linked (GlcNAc...) asparagine glycosylation sites follow: N222 and N286.

This sequence belongs to the glycosyltransferase 77 family. Requires Mn(2+) as cofactor. Mg(2+) serves as cofactor. Post-translationally, glycosylated. Expressed in roots, rosette leaves, cauline leaves and stems.

It is found in the golgi apparatus membrane. In terms of biological role, catalyzes the transfer of D-xylose from UDP-alpha-D-xylose onto L-fucose. Probably involved in the biosynthesis of rhamnogalacturonan II (RG-II) through xylosylation of the internal fucose moiety of the A-chain of RG-II, a structurally complex pectic polysaccharide of the primary cell wall. RG-II is essential for the cell wall integrity of rapidly growing tissues such as roots and pollen tube growth and elongation. The protein is UDP-D-xylose:L-fucose alpha-1,3-D-xylosyltransferase 1 of Arabidopsis thaliana (Mouse-ear cress).